A 521-amino-acid chain; its full sequence is Ribonuclease Y (521 aa).

A helical transmembrane segment spans residues 1 to 21 (MFFIEHPFVYLGLDLIVGCLI). A KH domain is found at 211-271 (TVSMVPLPSD…VRREVARLAL (61 aa)). One can recognise an HD domain in the interval 337–430 (VLQHSLEVAF…VQAADALSGA (94 aa)).

This sequence belongs to the RNase Y family.

The protein localises to the cell membrane. In terms of biological role, endoribonuclease that initiates mRNA decay. The chain is Ribonuclease Y from Desulfotalea psychrophila (strain LSv54 / DSM 12343).